The primary structure comprises 584 residues: Arginine--tRNA ligase (584 aa).

The 'HIGH' region motif lies at 126 to 136 (PNIAKEMHVGH).

Belongs to the class-I aminoacyl-tRNA synthetase family. Monomer.

It localises to the cytoplasm. It catalyses the reaction tRNA(Arg) + L-arginine + ATP = L-arginyl-tRNA(Arg) + AMP + diphosphate. The chain is Arginine--tRNA ligase (argS) from Synechocystis sp. (strain ATCC 27184 / PCC 6803 / Kazusa).